We begin with the raw amino-acid sequence, 335 residues long: Hsp90 co-chaperone Cdc37-like 1 (335 aa).

A compositionally biased stretch (pro residues) spans 1 to 11; sequence MEQPWPPPGPW. The tract at residues 1-42 is disordered; it reads MEQPWPPPGPWSFPRTGGETEEESDLDVSPSSSHYSPVPDGG. The self-association stretch occupies residues 2-170; that stretch reads EQPWPPPGPW…YEQKIRHFGM (169 aa). The segment covering 27-40 has biased composition (low complexity); that stretch reads DVSPSSSHYSPVPD. 2 positions are modified to phosphoserine: S32 and S88. Positions 84-120 form a coiled coil; sequence HNSESLDQEHAKAQTAVSELRQREEEWRQKEEALVQR. The self-association and interaction with Hsp90 stretch occupies residues 147–276; the sequence is KTEEEDKSQS…SRVRLYAQSQ (130 aa). The interval 266–335 is interaction with Hsp70; the sequence is KSRVRLYAQS…EDDDRMMDTV (70 aa). A required for interaction with STIP1 region spans residues 277–335; it reads SLQPVTVQNHVPHSGVGCIGSLESLPQNPDSLQCCTPAPLCSVDSVVHKEDDDRMMDTV.

Belongs to the CDC37 family. As to quaternary structure, self-associates. Forms complexes with Hsp70 and Hsp90. Interacts with CDC37, FKBP4, PPID and STIP1.

It localises to the cytoplasm. Functionally, co-chaperone that binds to numerous proteins and promotes their interaction with Hsp70 and Hsp90. The protein is Hsp90 co-chaperone Cdc37-like 1 (Cdc37l1) of Mus musculus (Mouse).